The sequence spans 332 residues: Adenosine receptor A2b (332 aa).

Over 1-8 (MQLETQDA) the chain is Extracellular. Residues 9 to 33 (LYVALELAIAALSVAGNVLVCAAVG) form a helical membrane-spanning segment. The Cytoplasmic portion of the chain corresponds to 34-43 (TSSALQTPTN). Residues 44–67 (YFLVSLAAADVAVGLFAIPFAITI) form a helical membrane-spanning segment. At 68–78 (SLGFCTDFHSC) the chain is on the extracellular side. Cys78 and Cys170 are joined by a disulfide. The chain crosses the membrane as a helical span at residues 79–101 (LFLACFVLVLTQSSIFSLLAVAV). At 102–121 (DRYLAIRVPLRYKSLVTGTR) the chain is on the cytoplasmic side. A helical membrane pass occupies residues 122–144 (ARGVIAVLWVLAFGIGLTPFLGW). Residues 145 to 177 (NSKDSATNCTEPWDGTTNESCCLVKCLFENVVP) are Extracellular-facing. N-linked (GlcNAc...) asparagine glycans are attached at residues Asn152 and Asn162. Glu173 contributes to the adenosine binding site. A helical transmembrane segment spans residues 178-202 (MSYMVYFNFFGCVLPPLLIMLVIYI). Residues 203 to 234 (KIFMVACKQLQRTELVDHSRTVIQREIHAAKS) lie on the Cytoplasmic side of the membrane. The chain crosses the membrane as a helical span at residues 235-258 (LAMIVGIFALCWLPVHAINCVTLF). An adenosine-binding site is contributed by Asn253. Residues 259 to 266 (QPARAKDK) are Extracellular-facing. A helical transmembrane segment spans residues 267–290 (PKWAMNMAILLSHASSVVNPIVYA). Adenosine is bound by residues Ser278 and His279. Topologically, residues 291 to 332 (YRNRDFRYTFHKIISRYVLCQTDVLKSGNGQAGTQSALDVGL) are cytoplasmic. Residue Cys310 is the site of S-palmitoyl cysteine attachment.

The protein belongs to the G-protein coupled receptor 1 family.

Its subcellular location is the cell membrane. In terms of biological role, receptor for adenosine. The activity of this receptor is mediated by G proteins which activate adenylyl cyclase. The protein is Adenosine receptor A2b (ADORA2B) of Canis lupus familiaris (Dog).